Consider the following 424-residue polypeptide: GTPase Obg (424 aa).

Residues 1-158 enclose the Obg domain; sequence MFYDQAKIYV…RNLLLELKLL (158 aa). The 171-residue stretch at 159–329 folds into the OBG-type G domain; sequence ADVGLVGFPN…LVYAAAKALP (171 aa). GTP-binding positions include 165-172, 190-194, 212-215, 282-285, and 310-312; these read GFPNVGKS, FTTLV, DIPG, NKMD, and SAA. Ser172 and Thr192 together coordinate Mg(2+). The 78-residue stretch at 347–424 folds into the OCT domain; that stretch reads TQASAPHRFE…IAGIEFEWEE (78 aa).

The protein belongs to the TRAFAC class OBG-HflX-like GTPase superfamily. OBG GTPase family. Monomer. Requires Mg(2+) as cofactor.

The protein resides in the cytoplasm. In terms of biological role, an essential GTPase which binds GTP, GDP and possibly (p)ppGpp with moderate affinity, with high nucleotide exchange rates and a fairly low GTP hydrolysis rate. Plays a role in control of the cell cycle, stress response, ribosome biogenesis and in those bacteria that undergo differentiation, in morphogenesis control. The chain is GTPase Obg from Desulfitobacterium hafniense (strain Y51).